The chain runs to 399 residues: Yellow-related salivary protein M10 (399 aa).

An N-terminal signal peptide occupies residues 1-18 (MKFILSVLALASFQHVFC). Asn29 and Asn83 each carry an N-linked (GlcNAc...) asparagine glycan.

The protein belongs to the major royal jelly protein family. Salivary gland (at protein level).

It is found in the secreted. Probably modulates blood feeding of sand flies on vertebrate species by binding and sequestering different mediators involved in the host response. Functions as a chemoattractant for host neutrophils; likely acts through a G-protein-coupled receptor and effect is dependent on calcium influx and phosphatidylinositol 3-kinases (PI3K) activity. Its function is as follows. (Microbial infection) Probably enhances infection caused by Leishmania species in the host through augmentation of host neutrophil recruitment into the skin. The sequence is that of Yellow-related salivary protein M10 from Phlebotomus duboscqi (Sandfly).